The following is a 118-amino-acid chain: Small ribosomal subunit protein uS13 (118 aa).

The segment at 94 to 118 is disordered; sequence GLPVRGQRTKTNARTRKGPRKPIKK.

The protein belongs to the universal ribosomal protein uS13 family. Part of the 30S ribosomal subunit. Forms a loose heterodimer with protein S19. Forms two bridges to the 50S subunit in the 70S ribosome.

Its function is as follows. Located at the top of the head of the 30S subunit, it contacts several helices of the 16S rRNA. In the 70S ribosome it contacts the 23S rRNA (bridge B1a) and protein L5 of the 50S subunit (bridge B1b), connecting the 2 subunits; these bridges are implicated in subunit movement. Contacts the tRNAs in the A and P-sites. This Shigella dysenteriae serotype 1 (strain Sd197) protein is Small ribosomal subunit protein uS13.